Here is a 203-residue protein sequence, read N- to C-terminus: N-(5'-phosphoribosyl)anthranilate isomerase (203 aa).

This sequence belongs to the TrpF family.

The catalysed reaction is N-(5-phospho-beta-D-ribosyl)anthranilate = 1-(2-carboxyphenylamino)-1-deoxy-D-ribulose 5-phosphate. The protein operates within amino-acid biosynthesis; L-tryptophan biosynthesis; L-tryptophan from chorismate: step 3/5. This Listeria innocua serovar 6a (strain ATCC BAA-680 / CLIP 11262) protein is N-(5'-phosphoribosyl)anthranilate isomerase.